We begin with the raw amino-acid sequence, 527 residues long: Glucose-6-phosphate isomerase (527 aa).

The Proton donor role is filled by glutamate 323. Catalysis depends on residues histidine 352 and lysine 454.

It belongs to the GPI family.

It is found in the cytoplasm. It carries out the reaction alpha-D-glucose 6-phosphate = beta-D-fructose 6-phosphate. It participates in carbohydrate biosynthesis; gluconeogenesis. Its pathway is carbohydrate degradation; glycolysis; D-glyceraldehyde 3-phosphate and glycerone phosphate from D-glucose: step 2/4. Catalyzes the reversible isomerization of glucose-6-phosphate to fructose-6-phosphate. This is Glucose-6-phosphate isomerase from Prochlorococcus marinus (strain MIT 9312).